Consider the following 142-residue polypeptide: Large ribosomal subunit protein uL13 (142 aa).

Belongs to the universal ribosomal protein uL13 family. Part of the 50S ribosomal subunit.

Functionally, this protein is one of the early assembly proteins of the 50S ribosomal subunit, although it is not seen to bind rRNA by itself. It is important during the early stages of 50S assembly. This is Large ribosomal subunit protein uL13 from Histophilus somni (strain 2336) (Haemophilus somnus).